Reading from the N-terminus, the 551-residue chain is Dihydroxy-acid dehydratase (551 aa).

Position 78 (Asp78) interacts with Mg(2+). Cys119 is a [2Fe-2S] cluster binding site. Asp120 and Lys121 together coordinate Mg(2+). Lys121 bears the N6-carboxylysine mark. Cys191 contributes to the [2Fe-2S] cluster binding site. Glu441 lines the Mg(2+) pocket. Ser467 serves as the catalytic Proton acceptor.

It belongs to the IlvD/Edd family. In terms of assembly, homodimer. [2Fe-2S] cluster is required as a cofactor. Requires Mg(2+) as cofactor.

The enzyme catalyses (2R)-2,3-dihydroxy-3-methylbutanoate = 3-methyl-2-oxobutanoate + H2O. The catalysed reaction is (2R,3R)-2,3-dihydroxy-3-methylpentanoate = (S)-3-methyl-2-oxopentanoate + H2O. Its pathway is amino-acid biosynthesis; L-isoleucine biosynthesis; L-isoleucine from 2-oxobutanoate: step 3/4. It participates in amino-acid biosynthesis; L-valine biosynthesis; L-valine from pyruvate: step 3/4. In terms of biological role, functions in the biosynthesis of branched-chain amino acids. Catalyzes the dehydration of (2R,3R)-2,3-dihydroxy-3-methylpentanoate (2,3-dihydroxy-3-methylvalerate) into 2-oxo-3-methylpentanoate (2-oxo-3-methylvalerate) and of (2R)-2,3-dihydroxy-3-methylbutanoate (2,3-dihydroxyisovalerate) into 2-oxo-3-methylbutanoate (2-oxoisovalerate), the penultimate precursor to L-isoleucine and L-valine, respectively. The sequence is that of Dihydroxy-acid dehydratase from Pyrococcus abyssi (strain GE5 / Orsay).